The chain runs to 144 residues: Maximins 3/H11 type 1 (144 aa).

Residues 1 to 18 (MNFKYIVAVSFLIASAYA) form the signal peptide. 2 propeptides span residues 19 to 43 (RSVQ…REIR) and 73 to 122 (RTAE…KKEK). The residue at position 143 (isoleucine 143) is an Isoleucine amide.

It belongs to the bombinin family. Expressed by the skin glands.

The protein localises to the secreted. Maximin-3 shows antibacterial activity against both Gram-positive and Gram-negative bacteria. It also shows antimicrobial activity against the fungus C.albicans, but not against A.flavus nor P.uticale. It has little hemolytic activity. It possess a significant cytotoxicity against tumor cell lines. It possess a significant anti-HIV activity. It shows high spermicidal activity. Its function is as follows. Maximin-H11 shows antimicrobial activity against bacteria and against the fungus C.albicans. Shows strong hemolytic activity. The polypeptide is Maximins 3/H11 type 1 (Bombina maxima (Giant fire-bellied toad)).